We begin with the raw amino-acid sequence, 120 residues long: Flagellar protein FliT (120 aa).

Residues methionine 1 to isoleucine 50 form a required for homodimerization region. Positions valine 60–asparagine 98 are fliD binding.

It belongs to the FliT family. As to quaternary structure, homodimer. Interacts with FliD and FlhC.

Its subcellular location is the cytoplasm. It is found in the cytosol. In terms of biological role, dual-function protein that regulates the transcription of class 2 flagellar operons and that also acts as an export chaperone for the filament-capping protein FliD. As a transcriptional regulator, acts as an anti-FlhDC factor; it directly binds FlhC, thus inhibiting the binding of the FlhC/FlhD complex to class 2 promoters, resulting in decreased expression of class 2 flagellar operons. As a chaperone, effects FliD transition to the membrane by preventing its premature polymerization, and by directing it to the export apparatus. In Dickeya chrysanthemi (Pectobacterium chrysanthemi), this protein is Flagellar protein FliT.